The primary structure comprises 159 residues: Lipoprotein signal peptidase (159 aa).

2 consecutive transmembrane segments (helical) span residues 64–84 (SVQW…IWVV) and 89–109 (PPFW…GNGI). Catalysis depends on residues aspartate 119 and aspartate 135. A helical membrane pass occupies residues 130–150 (IFNPADIAINLAVLCFLVDLW).

The protein belongs to the peptidase A8 family.

Its subcellular location is the cell inner membrane. The enzyme catalyses Release of signal peptides from bacterial membrane prolipoproteins. Hydrolyzes -Xaa-Yaa-Zaa-|-(S,diacylglyceryl)Cys-, in which Xaa is hydrophobic (preferably Leu), and Yaa (Ala or Ser) and Zaa (Gly or Ala) have small, neutral side chains.. It participates in protein modification; lipoprotein biosynthesis (signal peptide cleavage). This protein specifically catalyzes the removal of signal peptides from prolipoproteins. The chain is Lipoprotein signal peptidase from Parasynechococcus marenigrum (strain WH8102).